Here is a 288-residue protein sequence, read N- to C-terminus: 4-hydroxy-tetrahydrodipicolinate synthase (288 aa).

A pyruvate-binding site is contributed by T42. Residue Y129 is the Proton donor/acceptor of the active site. K158 acts as the Schiff-base intermediate with substrate in catalysis. Residue I200 coordinates pyruvate.

It belongs to the DapA family. Homotetramer; dimer of dimers.

It localises to the cytoplasm. It carries out the reaction L-aspartate 4-semialdehyde + pyruvate = (2S,4S)-4-hydroxy-2,3,4,5-tetrahydrodipicolinate + H2O + H(+). Its pathway is amino-acid biosynthesis; L-lysine biosynthesis via DAP pathway; (S)-tetrahydrodipicolinate from L-aspartate: step 3/4. Its function is as follows. Catalyzes the condensation of (S)-aspartate-beta-semialdehyde [(S)-ASA] and pyruvate to 4-hydroxy-tetrahydrodipicolinate (HTPA). This Thermosipho melanesiensis (strain DSM 12029 / CIP 104789 / BI429) protein is 4-hydroxy-tetrahydrodipicolinate synthase.